The chain runs to 260 residues: Taurine import ATP-binding protein TauB (260 aa).

In terms of domain architecture, ABC transporter spans 6 to 235 (AQQVSVVYAS…RYAHGEPVRS (230 aa)). ATP is bound at residue 40–47 (GASGCGKS).

This sequence belongs to the ABC transporter superfamily. Taurine importer (TC 3.A.1.17.1) family. In terms of assembly, the complex is composed of two ATP-binding proteins (TauB), two transmembrane proteins (TauC) and a solute-binding protein (TauA).

The protein resides in the cell inner membrane. It catalyses the reaction taurine(out) + ATP + H2O = taurine(in) + ADP + phosphate + H(+). Its function is as follows. Part of the ABC transporter complex TauABC involved in taurine import. Responsible for energy coupling to the transport system. This Burkholderia pseudomallei (strain K96243) protein is Taurine import ATP-binding protein TauB.